We begin with the raw amino-acid sequence, 190 residues long: Peptidyl-tRNA hydrolase (190 aa).

Y18 contributes to the tRNA binding site. The Proton acceptor role is filled by H23. Positions 67, 69, and 115 each coordinate tRNA.

The protein belongs to the PTH family. In terms of assembly, monomer.

The protein localises to the cytoplasm. It catalyses the reaction an N-acyl-L-alpha-aminoacyl-tRNA + H2O = an N-acyl-L-amino acid + a tRNA + H(+). In terms of biological role, hydrolyzes ribosome-free peptidyl-tRNAs (with 1 or more amino acids incorporated), which drop off the ribosome during protein synthesis, or as a result of ribosome stalling. Catalyzes the release of premature peptidyl moieties from peptidyl-tRNA molecules trapped in stalled 50S ribosomal subunits, and thus maintains levels of free tRNAs and 50S ribosomes. This is Peptidyl-tRNA hydrolase from Leptospira interrogans serogroup Icterohaemorrhagiae serovar Lai (strain 56601).